The primary structure comprises 283 residues: Thymidylate synthase (283 aa).

Position 22 (R22) interacts with dUMP. Residue C160 is the Nucleophile of the active site. Residues 180-183, N191, and 221-223 each bind dUMP; these read RSCD and HIY. A (6R)-5,10-methylene-5,6,7,8-tetrahydrofolate-binding site is contributed by D183. S282 is a binding site for (6R)-5,10-methylene-5,6,7,8-tetrahydrofolate.

This sequence belongs to the thymidylate synthase family. Bacterial-type ThyA subfamily. In terms of assembly, homodimer.

The protein resides in the cytoplasm. The catalysed reaction is dUMP + (6R)-5,10-methylene-5,6,7,8-tetrahydrofolate = 7,8-dihydrofolate + dTMP. The protein operates within pyrimidine metabolism; dTTP biosynthesis. In terms of biological role, catalyzes the reductive methylation of 2'-deoxyuridine-5'-monophosphate (dUMP) to 2'-deoxythymidine-5'-monophosphate (dTMP) while utilizing 5,10-methylenetetrahydrofolate (mTHF) as the methyl donor and reductant in the reaction, yielding dihydrofolate (DHF) as a by-product. This enzymatic reaction provides an intracellular de novo source of dTMP, an essential precursor for DNA biosynthesis. The protein is Thymidylate synthase of Shewanella loihica (strain ATCC BAA-1088 / PV-4).